We begin with the raw amino-acid sequence, 112 residues long: K(+)/H(+) antiporter modulator KhtS (112 aa).

The interval 42 to 64 is disordered; sequence YVPMSSYPQETQSAKTPSPGSMH. Positions 47–60 are enriched in polar residues; that stretch reads SYPQETQSAKTPSP.

It localises to the cell membrane. Functionally, modulates the activity of the potassium/proton antiporter KhtU. Involved in protection of the cell from methylglyoxal, a toxic by-product of glycolysis. The sequence is that of K(+)/H(+) antiporter modulator KhtS from Bacillus subtilis (strain 168).